A 59-amino-acid chain; its full sequence is MLKSLKFLLVFIILAQLLSCTPSAPYEIKSPCVSVDIDDNSSLSINPCIRRPINAVNIV.

A helical membrane pass occupies residues 7–24 (FLLVFIILAQLLSCTPSA).

The protein resides in the membrane. This is an uncharacterized protein from Rickettsia prowazekii (strain Madrid E).